The sequence spans 124 residues: Protein MGF 110-8L (124 aa).

The first 16 residues, 1 to 16 (MKVLILVLLGVVILQA), serve as a signal peptide directing secretion. N-linked (GlcNAc...) asparagine; by host glycosylation is found at N76 and N94.

This sequence belongs to the asfivirus MGF 110 family.

Functionally, plays a role in virus cell tropism, and may be required for efficient virus replication in macrophages. In Ornithodoros (relapsing fever ticks), this protein is Protein MGF 110-8L.